Reading from the N-terminus, the 483-residue chain is Regulatory protein ViaA (483 aa).

The protein belongs to the ViaA family. In terms of assembly, homodimer. Interacts with RavA.

Its subcellular location is the cytoplasm. Functionally, component of the RavA-ViaA chaperone complex, which may act on the membrane to optimize the function of some of the respiratory chains. ViaA stimulates the ATPase activity of RavA. This Salmonella typhi protein is Regulatory protein ViaA.